Reading from the N-terminus, the 257-residue chain is Phosphate import ATP-binding protein PstB (257 aa).

The ABC transporter domain maps to 11–252 (IQVRDLNFYY…PAKKQTEDYI (242 aa)). 43–50 (GPSGCGKS) is an ATP binding site.

It belongs to the ABC transporter superfamily. Phosphate importer (TC 3.A.1.7) family. In terms of assembly, the complex is composed of two ATP-binding proteins (PstB), two transmembrane proteins (PstC and PstA) and a solute-binding protein (PstS).

It is found in the cell inner membrane. It catalyses the reaction phosphate(out) + ATP + H2O = ADP + 2 phosphate(in) + H(+). Its function is as follows. Part of the ABC transporter complex PstSACB involved in phosphate import. Responsible for energy coupling to the transport system. This Enterobacter cloacae protein is Phosphate import ATP-binding protein PstB.